The sequence spans 240 residues: MEQPKYKRVVLKLSGEALAGKQGFGIQPAVIQSIAKQVKEVAELDVEIAIVVGGGNIWRGKTGSEMGMDRATADYMGMLATVMNALALQDSLEQLGVETRVQTSIEMRQVAEPYIRRRAIRHLEKKRVVIFAAGTGNPYFSTDTTAALRAAEIEADVILMAKNNVDGVYSADPNIDASAVKYDELSYLDVIQQGLGVMDSTASSLCMDNNIPLIVFSITEEGNIKRAVLGENIGTIVRGK.

12-15 (KLSG) serves as a coordination point for ATP. An involved in allosteric activation by GTP region spans residues 20–25 (GKQGFG). UMP is bound at residue glycine 54. Glycine 55 and arginine 59 together coordinate ATP. UMP contacts are provided by residues aspartate 74 and 135–142 (TGNPYFST). Residues asparagine 163, tyrosine 169, and aspartate 172 each contribute to the ATP site.

It belongs to the UMP kinase family. Homohexamer.

The protein resides in the cytoplasm. It catalyses the reaction UMP + ATP = UDP + ADP. The protein operates within pyrimidine metabolism; CTP biosynthesis via de novo pathway; UDP from UMP (UMPK route): step 1/1. With respect to regulation, allosterically activated by GTP. Inhibited by UTP. Its function is as follows. Catalyzes the reversible phosphorylation of UMP to UDP. The protein is Uridylate kinase of Geobacillus thermodenitrificans (strain NG80-2).